The chain runs to 521 residues: Importin subunit alpha-3 (521 aa).

Residue A2 is modified to N-acetylalanine. Residues A2–E58 enclose the IBB domain. The Nuclear localization signal motif lies at E43 to P52. At S60 the chain carries Phosphoserine. The ARM 1; truncated repeat unit spans residues Y66–P106. 8 ARM repeats span residues I107–Q149, T150–Y194, V195–P233, P234–Q278, M279–Q318, T319–Q360, V361–R400, and K401–E443. Residues W137 to R229 are NLS binding site (major). The tract at residues R306–N394 is NLS binding site (minor). Residues E447–F485 form an ARM 10; atypical repeat.

It belongs to the importin alpha family. As to quaternary structure, forms a complex with importin subunit beta-1 (KPNB1). Interacts with SNAI1. Interacts with TALDO1 isoform 1. Interacts with CYB1. In terms of assembly, (Microbial infection) Interacts with MERS virus protein OF4b; this interaction prevents the translocation of NF-kappa-B complex to the nucleus. (Microbial infection) Interacts with human adenovirus 5 E1A protein; this interaction allows E1A import into the host nucleus. As to quaternary structure, (Microbial infection) Interacts with Chikungunya virus capsid protein; this interaction allows the nuclear import of the viral capsid protein. As to expression, highly expressed in testis, ovary, small intestine, heart, skeletal muscle, lung and pancreas, but barely detectable in kidney, thymus, colon and peripheral blood leukocytes.

It is found in the cytoplasm. Its subcellular location is the nucleus. Functionally, functions in nuclear protein import as an adapter protein for nuclear receptor KPNB1. Binds specifically and directly to substrates containing either a simple or bipartite NLS motif. Docking of the importin/substrate complex to the nuclear pore complex (NPC) is mediated by KPNB1 through binding to nucleoporin FxFG repeats and the complex is subsequently translocated through the pore by an energy requiring, Ran-dependent mechanism. At the nucleoplasmic side of the NPC, Ran binds to importin-beta and the three components separate and importin-alpha and -beta are re-exported from the nucleus to the cytoplasm where GTP hydrolysis releases Ran from importin. The directionality of nuclear import is thought to be conferred by an asymmetric distribution of the GTP- and GDP-bound forms of Ran between the cytoplasm and nucleus. Mediates nuclear import of AARS1, MRTFA and RANBP3. Its function is as follows. (Microbial infection) In vitro, mediates the nuclear import of human cytomegalovirus UL84 by recognizing a non-classical NLS. In vitro, mediates the nuclear import of human cytomegalovirus UL84 by recognizing a non-classical NLS. This is Importin subunit alpha-3 from Homo sapiens (Human).